The chain runs to 375 residues: Alcohol dehydrogenase 1 (375 aa).

Ala1 is modified (N-acetylalanine). Zn(2+) is bound by residues Cys46, His68, Cys98, Cys101, Cys104, Cys112, and Cys175. NAD(+) is bound by residues 200-205 (GLGGVG), Asp224, Lys229, 293-295 (VGV), and Arg370.

Belongs to the zinc-containing alcohol dehydrogenase family. Class-I subfamily. In terms of assembly, homodimer. It depends on Zn(2+) as a cofactor.

It is found in the cytoplasm. The enzyme catalyses a primary alcohol + NAD(+) = an aldehyde + NADH + H(+). It carries out the reaction a secondary alcohol + NAD(+) = a ketone + NADH + H(+). This is Alcohol dehydrogenase 1 from Columba livia (Rock dove).